A 261-amino-acid chain; its full sequence is [LysW]-aminoadipate/[LysW]-glutamate kinase (261 aa).

Residues 35-36, Arg-62, and Asn-166 contribute to the substrate site; that span reads GG.

It belongs to the acetylglutamate kinase family. LysZ subfamily.

It localises to the cytoplasm. The catalysed reaction is [amino-group carrier protein]-C-terminal-N-(1,4-dicarboxybutan-1-yl)-L-glutamine + ATP = [amino-group carrier protein]-C-terminal-N-(1-carboxy-5-phosphooxy-5-oxopentan-1-yl)-L-glutamine + ADP. The enzyme catalyses [amino-group carrier protein]-C-terminal-gamma-(L-glutamyl)-L-glutamate + ATP = [amino-group carrier protein]-C-terminal-gamma-(5-phospho-L-glutamyl)-L-glutamate + ADP. Its pathway is amino-acid biosynthesis; L-lysine biosynthesis via AAA pathway; L-lysine from L-alpha-aminoadipate (Thermus route): step 2/5. It participates in amino-acid biosynthesis; L-arginine biosynthesis. Its function is as follows. Involved in both the arginine and lysine biosynthetic pathways. Phosphorylates the LysW-bound precursors glutamate (for arginine biosynthesis), respectively alpha-aminoadipate (for lysine biosynthesis). The polypeptide is [LysW]-aminoadipate/[LysW]-glutamate kinase (Sulfurisphaera tokodaii (strain DSM 16993 / JCM 10545 / NBRC 100140 / 7) (Sulfolobus tokodaii)).